The chain runs to 418 residues: Alpha-tubulin N-acetyltransferase 1 (418 aa).

The region spanning 1-186 is the N-acetyltransferase domain; the sequence is MEFEFDVHKI…NNFVVFEGFF (186 aa). Acetyl-CoA is bound by residues 120-133 and 156-165; these read FYIH…GFGK and SEKFLSFLRK. 2 disordered regions span residues 237-292 and 322-353; these read SSLG…MNLS and QIKE…HQND. Residues 277–287 show a composition bias toward basic and acidic residues; the sequence is QEDHSQRRRTS. A compositionally biased stretch (polar residues) spans 329–353; sequence RTDSSAQEGRTQDRPNGSNSQHQND.

Belongs to the acetyltransferase ATAT1 family.

It is found in the cytoplasm. The protein localises to the membrane. It localises to the clathrin-coated pit. The protein resides in the cell junction. Its subcellular location is the focal adhesion. It is found in the cell projection. The protein localises to the axon. It localises to the cytoskeleton. The protein resides in the spindle. The enzyme catalyses L-lysyl-[alpha-tubulin] + acetyl-CoA = N(6)-acetyl-L-lysyl-[alpha-tubulin] + CoA + H(+). In terms of biological role, specifically acetylates 'Lys-40' in alpha-tubulin on the lumenal side of microtubules. Promotes microtubule destabilization and accelerates microtubule dynamics; this activity may be independent of acetylation activity. Acetylates alpha-tubulin with a slow enzymatic rate, due to a catalytic site that is not optimized for acetyl transfer. Enters the microtubule through each end and diffuses quickly throughout the lumen of microtubules. Acetylates only long/old microtubules because of its slow acetylation rate since it does not have time to act on dynamically unstable microtubules before the enzyme is released. May be involved in neuron development. This Xenopus laevis (African clawed frog) protein is Alpha-tubulin N-acetyltransferase 1.